The primary structure comprises 483 residues: Glutamyl-tRNA(Gln) amidotransferase subunit A (483 aa).

Active-site charge relay system residues include Lys75 and Ser150. The Acyl-ester intermediate role is filled by Ser174.

This sequence belongs to the amidase family. GatA subfamily. Heterotrimer of A, B and C subunits.

It carries out the reaction L-glutamyl-tRNA(Gln) + L-glutamine + ATP + H2O = L-glutaminyl-tRNA(Gln) + L-glutamate + ADP + phosphate + H(+). Its function is as follows. Allows the formation of correctly charged Gln-tRNA(Gln) through the transamidation of misacylated Glu-tRNA(Gln) in organisms which lack glutaminyl-tRNA synthetase. The reaction takes place in the presence of glutamine and ATP through an activated gamma-phospho-Glu-tRNA(Gln). The protein is Glutamyl-tRNA(Gln) amidotransferase subunit A of Deinococcus geothermalis (strain DSM 11300 / CIP 105573 / AG-3a).